The sequence spans 366 residues: MVKGTNAEQALAREEASSSRPKRQRVPSIVEEEGENGGGDVVVRSGTLFELDLLDCPICCNALTIPIFQCDKGHIACSSCCTNVSNKCPYCSLAIGNYRSRIMERVVEAFIVRCPIVAGEASSSRQKRLRVPSIDEENGENGGRDVVVPSGTLSQLDLLDCPVCSKALKISIFQQSLFLAKRQNGCTETFSYGNELVHEKKCSFALCYCPAPNCNYAGVYKDLYSHYAANHKKLWTRFSCGYSMHVCMDFESKSLVLQQYSDGPLVVLQCFKEPPQGLFWTVNCIAPSAPGVGKFSYELSYSTAGNTLTFRSSEMNRIQKVSFQTPEKDFMFIPEYILCPMGLYKGTYICIRSLEEEEEEEEDNED.

The disordered stretch occupies residues 1–37; it reads MVKGTNAEQALAREEASSSRPKRQRVPSIVEEEGENG. Residues 56-92 form an RING-type; degenerate zinc finger; it reads CPICCNALTIPIFQCDKGHIACSSCCTNVSNKCPYCS. Residues 106 to 354 are SBD; the sequence is VVEAFIVRCP…KGTYICIRSL (249 aa). The SIAH-type; degenerate zinc finger occupies 109-232; it reads AFIVRCPIVA…LYSHYAANHK (124 aa). 8 residues coordinate Zn(2+): Cys114, Cys186, His198, Cys202, Cys209, Cys214, His226, and His231.

The protein belongs to the SINA (Seven in absentia) family.

The catalysed reaction is S-ubiquitinyl-[E2 ubiquitin-conjugating enzyme]-L-cysteine + [acceptor protein]-L-lysine = [E2 ubiquitin-conjugating enzyme]-L-cysteine + N(6)-ubiquitinyl-[acceptor protein]-L-lysine.. It functions in the pathway protein modification; protein ubiquitination. Its function is as follows. E3 ubiquitin-protein ligase that mediates ubiquitination and subsequent proteasomal degradation of target proteins. E3 ubiquitin ligases accept ubiquitin from an E2 ubiquitin-conjugating enzyme in the form of a thioester and then directly transfers the ubiquitin to targeted substrates. It probably triggers the ubiquitin-mediated degradation of different substrates. The chain is E3 ubiquitin-protein ligase SINA-like 1 from Arabidopsis thaliana (Mouse-ear cress).